Here is a 432-residue protein sequence, read N- to C-terminus: 3-phosphoshikimate 1-carboxyvinyltransferase (432 aa).

Lysine 21, serine 22, and arginine 26 together coordinate 3-phosphoshikimate. Lysine 21 is a binding site for phosphoenolpyruvate. Positions 93 and 121 each coordinate phosphoenolpyruvate. Residues serine 166, glutamine 168, aspartate 318, and lysine 345 each contribute to the 3-phosphoshikimate site. Residue glutamine 168 coordinates phosphoenolpyruvate. Aspartate 318 (proton acceptor) is an active-site residue. Arginine 349 and arginine 391 together coordinate phosphoenolpyruvate.

This sequence belongs to the EPSP synthase family. As to quaternary structure, monomer.

It localises to the cytoplasm. The catalysed reaction is 3-phosphoshikimate + phosphoenolpyruvate = 5-O-(1-carboxyvinyl)-3-phosphoshikimate + phosphate. It participates in metabolic intermediate biosynthesis; chorismate biosynthesis; chorismate from D-erythrose 4-phosphate and phosphoenolpyruvate: step 6/7. Catalyzes the transfer of the enolpyruvyl moiety of phosphoenolpyruvate (PEP) to the 5-hydroxyl of shikimate-3-phosphate (S3P) to produce enolpyruvyl shikimate-3-phosphate and inorganic phosphate. The polypeptide is 3-phosphoshikimate 1-carboxyvinyltransferase (Persephonella marina (strain DSM 14350 / EX-H1)).